The sequence spans 223 residues: GrpE protein homolog, mitochondrial (223 aa).

It belongs to the GrpE family. In terms of assembly, component of the PAM complex, at least composed of mtHsp70, mge1, tim44, pam16, pam17 and pam18.

Its subcellular location is the mitochondrion matrix. Essential component of the PAM complex, a complex required for the translocation of transit peptide-containing proteins from the inner membrane into the mitochondrial matrix in an ATP-dependent manner. Seems to control the nucleotide-dependent binding of ssc1 to substrate proteins. The sequence is that of GrpE protein homolog, mitochondrial (mge1) from Schizosaccharomyces pombe (strain 972 / ATCC 24843) (Fission yeast).